Here is a 667-residue protein sequence, read N- to C-terminus: Probable potassium transport system protein Kup (667 aa).

Transmembrane regions (helical) follow at residues 16–36 (GFIIALGIVYGDIGTSPLYTM), 58–78 (VSLIIWTLTLVTTIKYVLIAL), 101–121 (WLIIPAMLGGATLLSDGALTP), 146–166 (TNVILTTLLILMVLFGLQRFG), 167–187 (TGVIGKLFGPVMLVWFSVLGI), 221–241 (IFILGSIFLATTGAEALYSDL), 253–273 (WPFVKVCIILSYCGQAAWILA), 294–314 (VYLVILATLAAIIASQALISG), 343–363 (LYIPVINWSLFAVTSCTVLYF), 373–393 (YGLAITITMLMTTILLAYYLI), 399–419 (PLLASLLMAFFAFIEFIFFLA), and 424–444 (FMHGGYVVVVLALAIVFVMVI).

The protein belongs to the HAK/KUP transporter (TC 2.A.72) family.

Its subcellular location is the cell membrane. It carries out the reaction K(+)(in) + H(+)(in) = K(+)(out) + H(+)(out). Functionally, transport of potassium into the cell. Likely operates as a K(+):H(+) symporter. In Streptococcus equi subsp. equi (strain 4047), this protein is Probable potassium transport system protein Kup.